The sequence spans 148 residues: UPF0756 membrane protein YeaL (148 aa).

Transmembrane regions (helical) follow at residues 14–34 (ALGF…LIIV), 51–71 (LSIG…SGTL), 86–106 (LVAI…VTLM), and 121–141 (VLGV…AGLV).

It belongs to the UPF0756 family.

The protein resides in the cell membrane. This is UPF0756 membrane protein YeaL from Shigella dysenteriae serotype 1 (strain Sd197).